Consider the following 622-residue polypeptide: MLITRLRVPTIKRPLLPITSHLVRHCIRTYVATNHGNVRPFITPYKSSLPVRCLIAQRHIRTFPSNDKFTTKASNIETILLRKNNEREFKQSLLADAKNFQERFKINLKWILIKNNRPFSLNEISIIASWLILSQILWLILSTTTFISFYLFVINSVFSQEYIHEKKIYERLLKWLLKDHKCSNQDLEITFSPEDKASMLVLSPDWESNSILIKRLNVRDEILDLDLKFHHINLNVSLKNWLLGRGLITNVSIYGIRGCLNLSNFINLVNSFQGDQKTENFLKTLNNVEITDSEILLKQSLSAQETPSLKFSIYNLSLPRLRLNHFISDILSAKTFSGSINNSLFNLFKRQQKLTAVIENNNKNRMASSKFDFTDNNQENYRTVTHQDDPNYVTTLRLNFININDLKFNGDGKFNWLKDGQVEILADIMLTNSTSHLSSESKYAVVDLKVTCRDLKTTFPQEPPVLSTGDSIVSLDELKPIITFINSYEGMANPILKDFSENERLTNSIIWNSPNVSINRQRKSYPLTTKVTSNSTKEIIKFHNQPNTNANEIVLRCKMVKNLSDLQLININQILDQITMELYVDLTKIVEDWEFKNKNDWMKQWGTTFASQLLLFGFGAMV.

The transit peptide at 1–70 (MLITRLRVPT…RTFPSNDKFT (70 aa)) directs the protein to the mitochondrion. Residues 71–123 (TKASNIETILLRKNNEREFKQSLLADAKNFQERFKINLKWILIKNNRPFSLNE) lie on the Mitochondrial matrix side of the membrane. The chain crosses the membrane as a helical span at residues 124-144 (ISIIASWLILSQILWLILSTT). The Mitochondrial intermembrane portion of the chain corresponds to 145-601 (TFISFYLFVI…DWEFKNKNDW (457 aa)). Residues 602–622 (MKQWGTTFASQLLLFGFGAMV) traverse the membrane as a helical segment.

It belongs to the MDM31/MDM32 family. In terms of assembly, interacts with MDM31. Participates in a complex of about 175 kDa.

The protein resides in the mitochondrion inner membrane. In terms of biological role, involved in the organization of the mitochondrial membranes and the global structure of the mitochondria. Also required for mitochondrial distribution and mobility as well as for the maintenance of mitochondrial DNA nucleoids structures. In Saccharomyces cerevisiae (strain ATCC 204508 / S288c) (Baker's yeast), this protein is Mitochondrial distribution and morphology protein 32 (MDM32).